A 147-amino-acid chain; its full sequence is Large ribosomal subunit protein uL13 (147 aa).

Belongs to the universal ribosomal protein uL13 family. As to quaternary structure, part of the 50S ribosomal subunit.

This protein is one of the early assembly proteins of the 50S ribosomal subunit, although it is not seen to bind rRNA by itself. It is important during the early stages of 50S assembly. The polypeptide is Large ribosomal subunit protein uL13 (Polaromonas naphthalenivorans (strain CJ2)).